Consider the following 414-residue polypeptide: GPI mannosyltransferase 1 (414 aa).

10 consecutive transmembrane segments (helical) span residues 6–26 (ISHIIVLSLLIRIGFFLFGLY), 87–107 (YIFMISDLITGIIILKLLSGI), 119–139 (IIMLSSIWLLNPMVITISTRG), 149–171 (IMLSLYYLINKKSIIASGFWLGL), 183–203 (LPSIMLYLSTSGTPFIDVPIV), 213–233 (FLITTLITIGAFNGIMYSIYG), 282–302 (MEKFVMLPQLSISALILPLLF), 316–336 (FAFVTFNKVITSQYFIWFLIF), 356–376 (IVALLLWIVSQGSWLYFAYQL), and 387–407 (GLLFSSFFFYISNCWILSVFI).

It belongs to the PIGM family.

The protein localises to the endoplasmic reticulum membrane. Its pathway is glycolipid biosynthesis; glycosylphosphatidylinositol-anchor biosynthesis. Functionally, mannosyltransferase involved in glycosylphosphatidylinositol-anchor biosynthesis. Transfers the first alpha-1,4-mannose to GlcN-acyl-PI during GPI precursor assembly. Required for cell wall integrity. In Debaryomyces hansenii (strain ATCC 36239 / CBS 767 / BCRC 21394 / JCM 1990 / NBRC 0083 / IGC 2968) (Yeast), this protein is GPI mannosyltransferase 1 (GPI14).